Reading from the N-terminus, the 251-residue chain is uncharacterized protein (251 aa).

In terms of domain architecture, AMMECR1 spans Lys21–Leu246.

This is an uncharacterized protein from Saccharomyces cerevisiae (strain ATCC 204508 / S288c) (Baker's yeast).